A 1768-amino-acid chain; its full sequence is Callose synthase 11 (1768 aa).

Residues 1-308 (MRRQRPSVAT…WNVYRSFDRL (308 aa)) lie on the Cytoplasmic side of the membrane. The helical transmembrane segment at 309-329 (WILLLLYLQAAIIVATSDVKF) threads the bilayer. Residues 330–335 (PWQDRD) lie on the Extracellular side of the membrane. The chain crosses the membrane as a helical span at residues 336 to 356 (VEVALLTVFISWAGLRLLQSV). Topologically, residues 357–370 (LDASTQYSLVSRET) are cytoplasmic. The helical transmembrane segment at 371–391 (YWLFIRLTLKFVVAVAWTVLF) threads the bilayer. Residues 392-421 (SVFYARIWSQKNKDGVWSRAANERVVTFLK) lie on the Extracellular side of the membrane. Residues 422-442 (VVFVYVIPELLALVLFIVPCI) traverse the membrane as a helical segment. At 443–480 (RNWVEELNLGVVYFLTWWFYSKTFVGRGMREGLVDNVK) the chain is on the cytoplasmic side. A helical membrane pass occupies residues 481–501 (YTLFWIIVLATKFIFSYFLQI). The Extracellular segment spans residues 502–530 (RPLIAPTRALLNLKDATYNWHEFFGSTHR). A helical membrane pass occupies residues 531–551 (IAVGMLWLPVILVYLMDLQIW). The Cytoplasmic segment spans residues 552-1341 (YSIYSSLVGA…FFRMLSFFYT (790 aa)). Residues 1342-1362 (TVGYYFNTMLIVFTVYAFLWG) traverse the membrane as a helical segment. Residues 1363 to 1386 (RLYLALSGVEKIAKDRSSSNEALG) lie on the Extracellular side of the membrane. The chain crosses the membrane as a helical span at residues 1387–1407 (AILNQQFIIQLGLFTALPMIL). Topologically, residues 1408–1413 (ENSLER) are cytoplasmic. A helical membrane pass occupies residues 1414 to 1434 (GFLPAVWDFITMQLQLASFFY). The Extracellular segment spans residues 1435-1481 (TFSMGTRTHYFGRTILHGGAKYRATGRGFVVEHKKFAENYRLYARTH). A helical transmembrane segment spans residues 1482–1502 (FIKAIELAIILLVYAAYSPLA). The Cytoplasmic segment spans residues 1503–1508 (KSSFVY). The chain crosses the membrane as a helical span at residues 1509–1529 (ILMTISSWFLITSWIISPFLF). Residues 1530–1583 (NPSGFDWLKTVNDFDDFIAWLWSRGGLFTKADQSWFTWWNEEQEHLKTTGVWGK) are Extracellular-facing. The helical transmembrane segment at 1584–1604 (LLEIILDLRFFFFQYSIVYHL) threads the bilayer. The Cytoplasmic segment spans residues 1605–1612 (RIAENRTS). A helical transmembrane segment spans residues 1613–1633 (IGVYLISWGCIIGIVAIYITT). Over 1634 to 1649 (IYAQKRYSVKEHIKYR) the chain is Extracellular. A helical membrane pass occupies residues 1650–1670 (FIQFLVILLTVLVVVMMLQFT). At 1671–1673 (KLT) the chain is on the cytoplasmic side. A helical transmembrane segment spans residues 1674-1694 (VVDLLISLLAFVPTGWGLISI). Residues 1695–1719 (AQVLKPFLLSTVVWDTVISVARFYD) are Extracellular-facing. The chain crosses the membrane as a helical span at residues 1720–1740 (LFFGLIVMAPVALLSWLPGFQ). Topologically, residues 1741–1768 (NMQTRILFNEAFSRGLQISIILAGKKST) are cytoplasmic.

It belongs to the glycosyltransferase 48 family. As to expression, ubiquitous.

Its subcellular location is the cell membrane. The enzyme catalyses [(1-&gt;3)-beta-D-glucosyl](n) + UDP-alpha-D-glucose = [(1-&gt;3)-beta-D-glucosyl](n+1) + UDP + H(+). Its function is as follows. Required the formation of the callose wall separating the tetraspores (interstitial wall), but not for the callose wall surrounding the pollen mother cells (peripheral wall). Functionally redudant to CALS12 (GSL5). During plant growth and development, callose is found as a transitory component of the cell plate in dividing cells, is a major component of pollen mother cell walls and pollen tubes, and is found as a structural component of plasmodesmatal canals. The chain is Callose synthase 11 (CALS11) from Arabidopsis thaliana (Mouse-ear cress).